Here is a 128-residue protein sequence, read N- to C-terminus: Sirohydrochlorin cobaltochelatase (128 aa).

His9 functions as the Proton acceptor in the catalytic mechanism. His9 provides a ligand contact to Co(2+). Residues Lys43 and 68 to 73 each bind substrate; that span reads FATGTH. Position 73 (His73) interacts with Co(2+).

It belongs to the CbiX family. CbiXS subfamily. As to quaternary structure, homotetramer; dimer of dimers.

It catalyses the reaction Co-sirohydrochlorin + 2 H(+) = sirohydrochlorin + Co(2+). Its pathway is cofactor biosynthesis; adenosylcobalamin biosynthesis; cob(II)yrinate a,c-diamide from sirohydrochlorin (anaerobic route): step 1/10. Catalyzes the insertion of Co(2+) into sirohydrochlorin as part of the anaerobic pathway to cobalamin biosynthesis. This is Sirohydrochlorin cobaltochelatase from Saccharolobus islandicus (strain Y.N.15.51 / Yellowstone #2) (Sulfolobus islandicus).